The following is a 219-amino-acid chain: Phosphatidylinositol phosphate synthase (219 aa).

An a CDP-1,2-diacyl-sn-glycerol-binding site is contributed by asparagine 29 to threonine 32. Helical transmembrane passes span leucine 31–isoleucine 47 and isoleucine 53–valine 72. Positions 66 and 69 each coordinate Mg(2+). A CDP-1,2-diacyl-sn-glycerol-binding residues include glycine 70, arginine 74, and threonine 80. Residues aspartate 87 and aspartate 91 each coordinate Mg(2+). The active-site Proton acceptor is the aspartate 91. A run of 4 helical transmembrane segments spans residues isoleucine 93 to tyrosine 110, leucine 116 to valine 133, arginine 154 to tyrosine 171, and leucine 177 to methionine 194.

It belongs to the CDP-alcohol phosphatidyltransferase class-I family. As to quaternary structure, homodimer. Mg(2+) is required as a cofactor.

It is found in the cell membrane. The enzyme catalyses a CDP-1,2-diacyl-sn-glycerol + 1D-myo-inositol 3-phosphate = a 1,2-diacyl-sn-glycero-3-phospho-(1D-myo-inositol-3-phosphate) + CMP + H(+). It carries out the reaction 1,2-di-(9Z-octadecenoyl)-sn-glycero-3-cytidine-5'-diphosphate + 1D-myo-inositol 3-phosphate = 1,2-di-(9Z-octadecenoyl)-sn-glycero-3-phospho-(1D-myo-inositol-3-phosphate) + CMP + H(+). The protein operates within phospholipid metabolism; phosphatidylinositol phosphate biosynthesis. In terms of biological role, catalyzes the conjugation of the 1'-hydroxyl group of D-myo-inositol-3-phosphate (also named L-myo-inositol-1-phosphate) with a lipid tail of cytidine diphosphate diacylglycerol (CDP-DAG), forming phosphatidylinositol phosphate (PIP) and CMP. PIP is a precursor of phosphatidylinositol (PI) which is an essential lipid required for cell wall formation. In Corynebacterium glutamicum (strain ATCC 13032 / DSM 20300 / JCM 1318 / BCRC 11384 / CCUG 27702 / LMG 3730 / NBRC 12168 / NCIMB 10025 / NRRL B-2784 / 534), this protein is Phosphatidylinositol phosphate synthase.